We begin with the raw amino-acid sequence, 471 residues long: Ribulose bisphosphate carboxylase large chain (471 aa).

Asparagine 115 and threonine 165 together coordinate substrate. Lysine 167 acts as the Proton acceptor in catalysis. Substrate is bound at residue lysine 169. 3 residues coordinate Mg(2+): lysine 193, aspartate 195, and glutamate 196. Lysine 193 is modified (N6-carboxylysine). Histidine 286 acts as the Proton acceptor in catalysis. Substrate-binding residues include arginine 287, histidine 319, and serine 371.

It belongs to the RuBisCO large chain family. Type I subfamily. In terms of assembly, heterohexadecamer of 8 large chains and 8 small chains. Requires Mg(2+) as cofactor.

The protein resides in the carboxysome. The catalysed reaction is 2 (2R)-3-phosphoglycerate + 2 H(+) = D-ribulose 1,5-bisphosphate + CO2 + H2O. It carries out the reaction D-ribulose 1,5-bisphosphate + O2 = 2-phosphoglycolate + (2R)-3-phosphoglycerate + 2 H(+). Its function is as follows. RuBisCO catalyzes two reactions: the carboxylation of D-ribulose 1,5-bisphosphate, the primary event in carbon dioxide fixation, as well as the oxidative fragmentation of the pentose substrate in the photorespiration process. Both reactions occur simultaneously and in competition at the same active site. The protein is Ribulose bisphosphate carboxylase large chain of Synechococcus sp. (strain RCC307).